An 86-amino-acid polypeptide reads, in one-letter code: Small ribosomal subunit protein uS15 (86 aa).

Belongs to the universal ribosomal protein uS15 family. As to quaternary structure, part of the 30S ribosomal subunit. Forms a bridge to the 50S subunit in the 70S ribosome, contacting the 23S rRNA.

Its function is as follows. One of the primary rRNA binding proteins, it binds directly to 16S rRNA where it helps nucleate assembly of the platform of the 30S subunit by binding and bridging several RNA helices of the 16S rRNA. Functionally, forms an intersubunit bridge (bridge B4) with the 23S rRNA of the 50S subunit in the ribosome. This chain is Small ribosomal subunit protein uS15, found in Neorickettsia sennetsu (strain ATCC VR-367 / Miyayama) (Ehrlichia sennetsu).